A 176-amino-acid polypeptide reads, in one-letter code: Ribose 1,5-bisphosphate phosphokinase PhnN (176 aa).

10–17 (GPSGAGKD) provides a ligand contact to ATP.

It belongs to the ribose 1,5-bisphosphokinase family.

The enzyme catalyses alpha-D-ribose 1,5-bisphosphate + ATP = 5-phospho-alpha-D-ribose 1-diphosphate + ADP. Its pathway is metabolic intermediate biosynthesis; 5-phospho-alpha-D-ribose 1-diphosphate biosynthesis; 5-phospho-alpha-D-ribose 1-diphosphate from D-ribose 5-phosphate (route II): step 3/3. Catalyzes the phosphorylation of ribose 1,5-bisphosphate to 5-phospho-D-ribosyl alpha-1-diphosphate (PRPP). The chain is Ribose 1,5-bisphosphate phosphokinase PhnN from Methylobacterium radiotolerans (strain ATCC 27329 / DSM 1819 / JCM 2831 / NBRC 15690 / NCIMB 10815 / 0-1).